Consider the following 143-residue polypeptide: Transmembrane protein 80 (143 aa).

4 helical membrane passes run 22 to 42 (LLCL…LLLV), 47 to 67 (VFTY…LMGI), 88 to 108 (LAAS…FLLW), and 122 to 142 (PLLA…AAFV).

It is found in the membrane. It localises to the cell projection. The protein resides in the cilium. The protein is Transmembrane protein 80 (TMEM80) of Bos taurus (Bovine).